We begin with the raw amino-acid sequence, 520 residues long: Probable protein phosphatase 2C 39 (520 aa).

Residues 160-507 form the PPM-type phosphatase domain; it reads FLTSTEIKMA…DDVTIIVIIL (348 aa). Residues Asp195, Gly196, Asp435, and Asp498 each coordinate Mn(2+).

The protein belongs to the PP2C family. Mg(2+) serves as cofactor. It depends on Mn(2+) as a cofactor.

The catalysed reaction is O-phospho-L-seryl-[protein] + H2O = L-seryl-[protein] + phosphate. It carries out the reaction O-phospho-L-threonyl-[protein] + H2O = L-threonyl-[protein] + phosphate. The protein is Probable protein phosphatase 2C 39 of Oryza sativa subsp. japonica (Rice).